A 290-amino-acid polypeptide reads, in one-letter code: Lipoyl synthase (290 aa).

Residues C38, C43, C49, C64, C68, C71, and S277 each contribute to the [4Fe-4S] cluster site. A Radical SAM core domain is found at 50 to 266 (WSKGTATFLL…REIALDAGFR (217 aa)).

It belongs to the radical SAM superfamily. Lipoyl synthase family. It depends on [4Fe-4S] cluster as a cofactor.

It localises to the cytoplasm. It carries out the reaction [[Fe-S] cluster scaffold protein carrying a second [4Fe-4S](2+) cluster] + N(6)-octanoyl-L-lysyl-[protein] + 2 oxidized [2Fe-2S]-[ferredoxin] + 2 S-adenosyl-L-methionine + 4 H(+) = [[Fe-S] cluster scaffold protein] + N(6)-[(R)-dihydrolipoyl]-L-lysyl-[protein] + 4 Fe(3+) + 2 hydrogen sulfide + 2 5'-deoxyadenosine + 2 L-methionine + 2 reduced [2Fe-2S]-[ferredoxin]. The protein operates within protein modification; protein lipoylation via endogenous pathway; protein N(6)-(lipoyl)lysine from octanoyl-[acyl-carrier-protein]: step 2/2. Its function is as follows. Catalyzes the radical-mediated insertion of two sulfur atoms into the C-6 and C-8 positions of the octanoyl moiety bound to the lipoyl domains of lipoate-dependent enzymes, thereby converting the octanoylated domains into lipoylated derivatives. This is Lipoyl synthase from Chlorobaculum tepidum (strain ATCC 49652 / DSM 12025 / NBRC 103806 / TLS) (Chlorobium tepidum).